A 280-amino-acid chain; its full sequence is Tumor necrosis factor ligand superfamily member 6 (280 aa).

Over 1-80 (MQQPFNYPYP…KKRGNHSTGL (80 aa)) the chain is Cytoplasmic. A disordered region spans residues 20–70 (SSPWAPPGTVLPCPTSVPRRPGQRRPPPPPPPPPLPPPPPSPLPPLPLPPL). The span at 43–69 (RRPPPPPPPPPLPPPPPSPLPPLPLPP) shows a compositional bias: pro residues. A helical; Signal-anchor for type II membrane protein membrane pass occupies residues 81-101 (CLLVMFFMVLVALVGLGLGMF). Residues 102 to 280 (QLFHLQKELA…SQTFFGLYKL (179 aa)) lie on the Extracellular side of the membrane. Positions 117–155 (TSQKHTASSLEKQIGHPSPPPEKKEQRKVAHLTGKPNSR) are disordered. One can recognise a THD domain in the interval 144-280 (KVAHLTGKPN…SQTFFGLYKL (137 aa)). N-linked (GlcNAc...) asparagine glycosylation occurs at asparagine 183. A disulfide bridge connects residues cysteine 201 and cysteine 232. 2 N-linked (GlcNAc...) asparagine glycosylation sites follow: asparagine 249 and asparagine 259.

It belongs to the tumor necrosis factor family. In terms of assembly, homotrimer. Interacts with ARHGAP9, BAIAP2L1, BTK, CACNB3, CACNB4, CRK, DLG2, DNMBP, DOCK4, EPS8L3, FGR, FYB1, FYN, HCK, ITK, ITSN2, KALRN, LYN, MACC1, MIA, MPP4, MYO15A, NCF1, NCK1, NCK2, NCKIPSD, OSTF1, PIK3R1, PSTPIP1, RIMBP3C, SAMSN1, SH3GL3, SH3PXD2B, SH3PXD2A, SH3RF2, SKAP2, SNX33, SNX9, SORBS3, SPTA1, SRC, SRGAP1, SRGAP2, SRGAP3, TEC, TJP3 and YES1. The soluble form derives from the membrane form by proteolytic processing. The membrane-bound form undergoes two successive intramembrane proteolytic cleavages. The first one is processed by ADAM10 producing an N-terminal fragment, which lacks the receptor-binding extracellular domain. This ADAM10-processed FasL (FasL APL) remnant form is still membrane anchored and further processed by SPPL2A that liberates the FasL intracellular domain (FasL ICD). FasL shedding by ADAM10 is a prerequisite for subsequent intramembrane cleavage by SPPL2A in T-cells. In terms of processing, phosphorylated by FGR on tyrosine residues; this is required for ubiquitination and subsequent internalization. Post-translationally, N-glycosylated. Glycosylation enhances apoptotic activity. Monoubiquitinated.

The protein resides in the cell membrane. Its subcellular location is the cytoplasmic vesicle lumen. It is found in the lysosome lumen. It localises to the secreted. The protein localises to the nucleus. Its function is as follows. Cytokine that binds to TNFRSF6/FAS, a receptor that transduces the apoptotic signal into cells. Involved in cytotoxic T-cell-mediated apoptosis, natural killer cell-mediated apoptosis and in T-cell development. Initiates fratricidal/suicidal activation-induced cell death (AICD) in antigen-activated T-cells contributing to the termination of immune responses. TNFRSF6/FAS-mediated apoptosis has also a role in the induction of peripheral tolerance. Binds to TNFRSF6B/DcR3, a decoy receptor that blocks apoptosis. Functionally, induces FAS-mediated activation of NF-kappa-B, initiating non-apoptotic signaling pathways. Can induce apoptosis but does not appear to be essential for this process. Cytoplasmic form induces gene transcription inhibition. In Macaca fascicularis (Crab-eating macaque), this protein is Tumor necrosis factor ligand superfamily member 6 (FASLG).